Reading from the N-terminus, the 526-residue chain is Tyrosine-protein kinase transforming protein Src (526 aa).

The span at 1–15 (MGSSKSKPKGPSQRR) shows a compositional bias: basic residues. The tract at residues 1–59 (MGSSKSKPKGPSQRRRSLEPPDSTHHGGFPASQTPNKTAAPDTHRTPSRSFGTVATEPK) is disordered. Residue Gly-2 is the site of N-myristoyl glycine; by host attachment. Basic and acidic residues predominate over residues 16-25 (RSLEPPDSTH). The SH3 domain maps to 81 to 142 (GGVTTFVALY…PSNYVAPSDS (62 aa)). One can recognise an SH2 domain in the interval 148–245 (WYFGKITRRE…GLCHRLTNVC (98 aa)). The Protein kinase domain occupies 267-517 (LRLEVKLGQG…TFEYLQAQLL (251 aa)). ATP-binding positions include 273–281 (LGQGCFGEV) and Lys-295. Asp-386 serves as the catalytic Proton acceptor. Tyr-416 carries the post-translational modification Phosphotyrosine; by autocatalysis.

Belongs to the protein kinase superfamily. Tyr protein kinase family. SRC subfamily. As to quaternary structure, homodimer. The phosphorylated form is termed pp60v-src.

It carries out the reaction L-tyrosyl-[protein] + ATP = O-phospho-L-tyrosyl-[protein] + ADP + H(+). Its function is as follows. This phosphoprotein, required for both the initiation and the maintenance of neoplastic transformation, is a protein kinase that catalyzes the phosphorylation of tyrosine residues in vitro. The chain is Tyrosine-protein kinase transforming protein Src (V-SRC) from Rous sarcoma virus subgroup E (strain Schmidt-Ruppin) (RSV-SR-E).